The primary structure comprises 72 residues: DNA-directed RNA polymerase subunit omega (72 aa).

The protein belongs to the RNA polymerase subunit omega family. The RNAP catalytic core consists of 2 alpha, 1 beta, 1 beta' and 1 omega subunit. When a sigma factor is associated with the core the holoenzyme is formed, which can initiate transcription.

It catalyses the reaction RNA(n) + a ribonucleoside 5'-triphosphate = RNA(n+1) + diphosphate. Its function is as follows. Promotes RNA polymerase assembly. Latches the N- and C-terminal regions of the beta' subunit thereby facilitating its interaction with the beta and alpha subunits. The chain is DNA-directed RNA polymerase subunit omega from Francisella philomiragia subsp. philomiragia (strain ATCC 25017 / CCUG 19701 / FSC 153 / O#319-036).